A 447-amino-acid polypeptide reads, in one-letter code: Argininosuccinate synthase (447 aa).

ATP contacts are provided by residues 20-28 (AFSGGLDTS) and Ala46. Tyr102 contacts L-citrulline. Residues Gly132 and Thr134 each coordinate ATP. Residues Thr134, Asn138, and Asp139 each contribute to the L-aspartate site. Asn138 lines the L-citrulline pocket. ATP is bound at residue Asp139. Positions 142 and 195 each coordinate L-citrulline. Asp197 serves as a coordination point for ATP. Residues Thr204, Glu206, and Glu283 each coordinate L-citrulline.

Belongs to the argininosuccinate synthase family. Type 2 subfamily. Homotetramer.

The protein localises to the cytoplasm. It carries out the reaction L-citrulline + L-aspartate + ATP = 2-(N(omega)-L-arginino)succinate + AMP + diphosphate + H(+). It functions in the pathway amino-acid biosynthesis; L-arginine biosynthesis; L-arginine from L-ornithine and carbamoyl phosphate: step 2/3. This is Argininosuccinate synthase (argG) from Neisseria meningitidis serogroup A / serotype 4A (strain DSM 15465 / Z2491).